Consider the following 157-residue polypeptide: DNA gyrase inhibitor 2 (157 aa).

The protein belongs to the DNA gyrase inhibitor family. In terms of assembly, interacts with DNA gyrase.

It is found in the cytoplasm. Functionally, inhibits the supercoiling activity of DNA gyrase. Acts by inhibiting DNA gyrase at an early step, prior to (or at the step of) binding of DNA by the gyrase. It protects cells against toxins that target DNA gyrase, by inhibiting activity of these toxins and reducing the formation of lethal double-strand breaks in the cell. This Dickeya dadantii (strain 3937) (Erwinia chrysanthemi (strain 3937)) protein is DNA gyrase inhibitor 2.